The following is a 310-amino-acid chain: MNPHTNLNNVFDFPDLPMLLPKSEALSVTTDFSVPPVQQGAQQFHPPRNLGPQLARRWSCGDSQHADEPPASYYHNLGVALHNHFQMSNQHYLSDFDCPTTVSPISSAHETGQLPQLSPYDHIGNQDPHMFSPHAYGNSMIPDNSYFENASRSISAPNVGNSTLNPSLMSSDNAQSCGGRRRFRTNFTELQSTFLEDSFKESHYPDHKAKKYMADFLKIPEDRITVWFQNRRAKWRRKEHRQRDRTRNESFSGGSNSFDFACFSAQHPDDGPNAKHPNSFGIPNQPMSLDQFPMNTEQDFPEFPSLQEHQ.

The homeobox DNA-binding region spans 180–239; it reads RRRFRTNFTELQSTFLEDSFKESHYPDHKAKKYMADFLKIPEDRITVWFQNRRAKWRRKE. Positions 262–310 are disordered; that stretch reads CFSAQHPDDGPNAKHPNSFGIPNQPMSLDQFPMNTEQDFPEFPSLQEHQ. The span at 281 to 298 shows a compositional bias: polar residues; that stretch reads GIPNQPMSLDQFPMNTEQ.

In terms of tissue distribution, expressed in the bilateral sensory neurons AWA, AWB, AWC, ASE, FLP and PVD. Also expressed in the enteric intestinal and anal depressor muscles.

The protein resides in the nucleus. Its subcellular location is the cell projection. The protein localises to the axon. It localises to the cytoplasm. Its function is as follows. Transcriptional regulator which plays a role in the expulsion step of defecation by controlling enteric muscle-specific expression of exp-1 which is required for enteric muscle contraction. Not required for exp-1 expression in the PDA neuron. Also involved in controlling the length of the defecation cycle. The sequence is that of Homeobox protein dsc-1 from Caenorhabditis elegans.